The chain runs to 723 residues: F-box protein MAX2 homolog B (723 aa).

Residues 2-55 (AKTPIPFTTLNDLPDVILSNIIAAVSDTRSRNATALVCHKWLVLERSTRTSLTL) form the F-box domain.

As to quaternary structure, part of a putative SCF (SKP1/Cullin/F-box) ubiquitin ligase complex. Interacts with KAI2IA in the presence of (-)-germacrene D. Mainly expressed in fully expanded leaves, lateral roots, axillary and shoot apex, and, to a lower extent, in internodes and nodes.

It is found in the nucleus. It localises to the cytoplasm. Component of SCF(ASK-cullin-F-box) E3 ubiquitin ligase complexes, which may mediate the ubiquitination and subsequent proteasomal degradation of target proteins. Is necessary for responses to strigolactones and may be involved in the ubiquitin-mediated degradation of specific proteins that activate axillary growth. Targets probably SMAX1A to degradation upon the formation of an E3 SCF ubiquitin ligase complex (ASK-cullin-F-box) containing MAX2B and KAI2IA in response to (-)-germacrene D in the stigma. In Petunia hybrida (Petunia), this protein is F-box protein MAX2 homolog B.